A 279-amino-acid polypeptide reads, in one-letter code: Borealin (279 aa).

Residues 135-152 (KTKAKVAAKKPSTARKTR) show a composition bias toward basic residues. The disordered stretch occupies residues 135–180 (KTKAKVAAKKPSTARKTRASTANLTNTSKRTSKRGRATPSASKQIE). Polar residues predominate over residues 153–163 (ASTANLTNTSK).

It belongs to the borealin family. Component of the CPC at least composed of survivin/birc5, incenp, cdca8/borealin and/or cdca9/dasra-A, and aurkb/aurora-B. Interacts with incenp (via N-terminus).

The protein resides in the nucleus. Its subcellular location is the chromosome. The protein localises to the centromere. It is found in the cytoplasm. It localises to the cytoskeleton. The protein resides in the spindle. In terms of biological role, component of the chromosomal passenger complex (CPC), a complex that acts as a key regulator of mitosis. The CPC complex has essential functions at the centromere in ensuring correct chromosome alignment and segregation and is required for chromatin-induced microtubule stabilization and spindle assembly. Contributes to CPC function by facilitating loading of the CPC onto chromosomes. This Xenopus tropicalis (Western clawed frog) protein is Borealin (cdca8).